A 425-amino-acid chain; its full sequence is Amidase 1 (425 aa).

Ala2 carries the N-acetylalanine modification. Catalysis depends on charge relay system residues Lys36 and Ser113. The active-site Acyl-ester intermediate is the Ser137.

The protein belongs to the amidase family. As to expression, expressed in cotyledons, leaves and flower buds. Lower levels in roots, stems and siliques.

It localises to the cytoplasm. The protein resides in the nucleus. It is found in the nucleoplasm. The catalysed reaction is a monocarboxylic acid amide + H2O = a monocarboxylate + NH4(+). It catalyses the reaction indole-3-acetamide + H2O = (indol-3-yl)acetate + NH4(+). The enzyme catalyses 2-phenylacetamide + H2O = 2-phenylacetate + NH4(+). It carries out the reaction L-asparagine + H2O = L-aspartate + NH4(+). The catalysed reaction is 1-naphthaleneacetamide + H2O = 1-naphthaleneacetate + NH4(+). With respect to regulation, inhibited by phenylmethylsulfonyl fluoride (PMSF). Amidase involved in auxin biosynthesis. Converts indole-3-acetamide to indole-3-acetate. Converts phenyl-2-acetamide (PAM) to phenyl-2-acetate. Substrate preference is PAM &gt; IAM. Can also use L-asparagine and 1-naphtalene-acetamide as substrates, but not indole-3-acetonitrile or indole-3-acetyl-L-aspartic acid. This Arabidopsis thaliana (Mouse-ear cress) protein is Amidase 1.